A 483-amino-acid chain; its full sequence is Glutamate--tRNA ligase (483 aa).

Positions 11–21 match the 'HIGH' region motif; sequence PSPTGLLHIGN. The short motif at 255 to 259 is the 'KMSKS' region element; sequence KLSKR. Lys-258 contributes to the ATP binding site.

Belongs to the class-I aminoacyl-tRNA synthetase family. Glutamate--tRNA ligase type 1 subfamily. As to quaternary structure, monomer.

The protein localises to the cytoplasm. It carries out the reaction tRNA(Glu) + L-glutamate + ATP = L-glutamyl-tRNA(Glu) + AMP + diphosphate. Its function is as follows. Catalyzes the attachment of glutamate to tRNA(Glu) in a two-step reaction: glutamate is first activated by ATP to form Glu-AMP and then transferred to the acceptor end of tRNA(Glu). The sequence is that of Glutamate--tRNA ligase from Lactococcus lactis subsp. cremoris (strain SK11).